Reading from the N-terminus, the 2359-residue chain is Pre-mRNA-processing-splicing factor 8A (2359 aa).

Residues 1–54 form a disordered region; that stretch reads MWNNNDGMPLAPPGTGGSMMPPPPAAHPSYTALPPPSNPTPPVEPTPEEAEAKL. Pro residues predominate over residues 33-45; it reads LPPPSNPTPPVEP. The 132-residue stretch at 2127-2258 folds into the MPN domain; that stretch reads TYIMPKNILK…LTSYKLTQTG (132 aa).

As to quaternary structure, interacts with CLO.

The protein localises to the nucleus. In terms of biological role, functions as a scaffold that mediates the ordered assembly of spliceosomal proteins and snRNAs. Required for the assembly of the U4/U6-U5 tri-snRNP complex. Required for embryo development. Required for splicing efficiency of COOLAIR introns and usage of the proximal poly(A) site. COOLAIR is a set of long non-coding antisense transcripts produced at the FLOWERING LOCUS C (FLC). COOLAIR initiates just downstream of the major sense transcript poly(A) site and terminates either early or extends into the FLC promoter region. Splicing of COOLAIR by PRP8A is functionally important for FLC regulation. This is Pre-mRNA-processing-splicing factor 8A from Arabidopsis thaliana (Mouse-ear cress).